We begin with the raw amino-acid sequence, 373 residues long: Alanine racemase (373 aa).

The active-site Proton acceptor; specific for D-alanine is K35. An N6-(pyridoxal phosphate)lysine modification is found at K35. A substrate-binding site is contributed by R130. Catalysis depends on Y253, which acts as the Proton acceptor; specific for L-alanine. Substrate is bound at residue M305.

This sequence belongs to the alanine racemase family. Pyridoxal 5'-phosphate serves as cofactor.

The enzyme catalyses L-alanine = D-alanine. Its pathway is amino-acid biosynthesis; D-alanine biosynthesis; D-alanine from L-alanine: step 1/1. Its function is as follows. Catalyzes the interconversion of L-alanine and D-alanine. May also act on other amino acids. This Cupriavidus necator (strain ATCC 17699 / DSM 428 / KCTC 22496 / NCIMB 10442 / H16 / Stanier 337) (Ralstonia eutropha) protein is Alanine racemase (alr).